A 190-amino-acid polypeptide reads, in one-letter code: Heme-binding protein 1 (190 aa).

This sequence belongs to the HEBP family. In terms of assembly, monomer.

It localises to the cytoplasm. Its function is as follows. May bind free porphyrinogens that may be present in the cell and thus facilitate removal of these potentially toxic compound. Binds with a high affinity to one molecule of heme or porphyrins. It binds metalloporphyrins, free porphyrins and N-methylprotoporphyrin with similar affinities. The sequence is that of Heme-binding protein 1 (hebp1) from Xenopus laevis (African clawed frog).